Reading from the N-terminus, the 358-residue chain is RuBisCO accumulation factor 1 (358 aa).

Positions 11-194 (VSAAEAAELI…RQAIEKLLTD (184 aa)) are N-terminal alpha-helix. The tract at residues 218–344 (ARLIPVAGTF…VVLVLRPKKI (127 aa)) is C-terminal beta-sheet.

Belongs to the RAF family. In terms of assembly, homodimer. Forms an RbcL(8)-Raf1(8) complex. Forms complexes of many stoichiometries with RbcL with and without RbcS. RbcX and Raf1 can bind simultaneously to RbcL. Interacts with both RuBisCO subunits (ccbL, ccbS), GroEL, DnaK and alpha and beta phycocyanin (cpcA, cpcB) in pull-down experiments with tagged protein. C-terminally tagged Raf1 does not interact with either RuBisCO subunit, suggesting its C-terminus is involved in binding.

It localises to the cytoplasm. A major RuBisCO chaperone. Acts after GroEL-GroES chaperonin to fold and/or assemble the large subunit of RuBisCO (ccbL, rbcL). Cooperates with RbcX in RbcL folding, plays the major role in assembly of dimers into RbcL(8)-Raf1(8) intermediate complexes. RbcS replaces Raf1, leading to holoenzyme formation. In terms of biological role, required for optimal reconstitution of RbcL(8) upon expression in E.coli. Has been suggested to be involved in RuBisCO recycling and homeostasis rather than assembly. This chain is RuBisCO accumulation factor 1, found in Synechocystis sp. (strain ATCC 27184 / PCC 6803 / Kazusa).